A 286-amino-acid polypeptide reads, in one-letter code: 4-hydroxy-tetrahydrodipicolinate synthase (286 aa).

Residue Thr-42 coordinates pyruvate. The active-site Proton donor/acceptor is Tyr-129. The Schiff-base intermediate with substrate role is filled by Lys-157. Ile-196 contributes to the pyruvate binding site.

Belongs to the DapA family. In terms of assembly, homotetramer; dimer of dimers.

It is found in the cytoplasm. It catalyses the reaction L-aspartate 4-semialdehyde + pyruvate = (2S,4S)-4-hydroxy-2,3,4,5-tetrahydrodipicolinate + H2O + H(+). Its pathway is amino-acid biosynthesis; L-lysine biosynthesis via DAP pathway; (S)-tetrahydrodipicolinate from L-aspartate: step 3/4. Its function is as follows. Catalyzes the condensation of (S)-aspartate-beta-semialdehyde [(S)-ASA] and pyruvate to 4-hydroxy-tetrahydrodipicolinate (HTPA). In Chlamydia trachomatis serovar A (strain ATCC VR-571B / DSM 19440 / HAR-13), this protein is 4-hydroxy-tetrahydrodipicolinate synthase.